The primary structure comprises 322 residues: Quinolinate synthase (322 aa).

Positions 37 and 54 each coordinate iminosuccinate. Residue Cys-99 coordinates [4Fe-4S] cluster. Residues 125–127 (YIN) and Ser-142 contribute to the iminosuccinate site. Cys-185 is a binding site for [4Fe-4S] cluster. Residues 211–213 (HPE) and Thr-228 each bind iminosuccinate. Cys-278 contacts [4Fe-4S] cluster.

The protein belongs to the quinolinate synthase family. Type 2 subfamily. [4Fe-4S] cluster is required as a cofactor.

Its subcellular location is the cytoplasm. The enzyme catalyses iminosuccinate + dihydroxyacetone phosphate = quinolinate + phosphate + 2 H2O + H(+). Its pathway is cofactor biosynthesis; NAD(+) biosynthesis; quinolinate from iminoaspartate: step 1/1. Its function is as follows. Catalyzes the condensation of iminoaspartate with dihydroxyacetone phosphate to form quinolinate. The sequence is that of Quinolinate synthase from Prosthecochloris aestuarii (strain DSM 271 / SK 413).